The chain runs to 230 residues: Orotidine 5'-phosphate decarboxylase (230 aa).

Substrate is bound by residues Asp-11, Lys-34, 61–70, Thr-117, Arg-179, Gln-188, Gly-208, and Arg-209; that span reads DLKLHDIPNT. Lys-63 (proton donor) is an active-site residue.

The protein belongs to the OMP decarboxylase family. Type 1 subfamily. In terms of assembly, homodimer.

The enzyme catalyses orotidine 5'-phosphate + H(+) = UMP + CO2. Its pathway is pyrimidine metabolism; UMP biosynthesis via de novo pathway; UMP from orotate: step 2/2. Its function is as follows. Catalyzes the decarboxylation of orotidine 5'-monophosphate (OMP) to uridine 5'-monophosphate (UMP). The sequence is that of Orotidine 5'-phosphate decarboxylase from Streptococcus mutans serotype c (strain ATCC 700610 / UA159).